Reading from the N-terminus, the 741-residue chain is Ion-translocating oxidoreductase complex subunit C (741 aa).

4Fe-4S ferredoxin-type domains follow at residues 369-397 (GEPQ…QQLY) and 407-436 (KATT…VQYF). Positions 377, 380, 383, 387, 416, 419, 422, and 426 each coordinate [4Fe-4S] cluster. A disordered region spans residues 627–654 (IARAKARKLEQQQQANAEPEEQVDPRKA).

This sequence belongs to the 4Fe4S bacterial-type ferredoxin family. RnfC subfamily. As to quaternary structure, the complex is composed of six subunits: RsxA, RsxB, RsxC, RsxD, RsxE and RsxG. It depends on [4Fe-4S] cluster as a cofactor.

Its subcellular location is the cell inner membrane. Part of a membrane-bound complex that couples electron transfer with translocation of ions across the membrane. Required to maintain the reduced state of SoxR. The sequence is that of Ion-translocating oxidoreductase complex subunit C from Escherichia coli O127:H6 (strain E2348/69 / EPEC).